A 419-amino-acid chain; its full sequence is Dual specificity mitogen-activated protein kinase kinase 7 (419 aa).

N-acetylalanine is present on Ala-2. Positions 2-30 (AASSLEQKLSRLEAKLKQENREARRRIDL) form a coiled coil. The segment covering 18–30 (KQENREARRRIDL) has biased composition (basic and acidic residues). Residues 18 to 76 (KQENREARRRIDLNLDISPQRPRPTLQLPLANDGGSRSPSSESSPQHPTPPARPRHMLG) form a disordered region. Residues 36–63 (PQRPRPTLQLPLANDGGSRSPSSESSPQ) show a composition bias toward low complexity. Residues 37–57 (QRPRPTLQLPLANDGGSRSPS) form a d domain region. The region spanning 120–380 (LENLGEMGSG…YNKLLEHSFI (261 aa)) is the Protein kinase domain. Residues 126 to 134 (MGSGTCGQV) and Lys-149 each bind ATP. Asp-243 acts as the Proton acceptor in catalysis. The residue at position 271 (Ser-271) is a Phosphoserine; by MAP3K. Thr-275 carries the post-translational modification Phosphothreonine; by MAP3K. Residues 377 to 400 (HSFIKRYETLEVDVASWFKDVMAK) form a DVD domain region. Ser-411 bears the Phosphoserine mark.

It belongs to the protein kinase superfamily. STE Ser/Thr protein kinase family. MAP kinase kinase subfamily. In terms of assembly, interacts with isoform 1 of VRK2. Interacts (via its D domain) with its substrates MAPK8/JNK1, MAPK9/JNK2 and MAPK10/JNK3. Interacts (via its DVD domain) with MAP3Ks activators like MAP3K5/ASK1 and MAP3K1/MEKK1. Interacts with MAPK8IP1/JIP1, MAPK8IP2/JIP2 and MAPK8IP3/JIP3 scaffold proteins. Interacts with RASSF7, the interaction promotes phosphorylation. Found in a complex with SH3RF1, RAC1, MAP3K11/MLK3, MAPK8IP1/JIP1 and MAPK8/JNK1. Found in a complex with SH3RF1, RAC2, MAP3K7/TAK1, MAPK8IP1/JIP1, MAPK8/JNK1 and MAPK9/JNK2. It depends on Mg(2+) as a cofactor. Post-translationally, activated by phosphorylation on Ser-271 and Thr-275 by MAP kinase kinase kinases (MAP3Ks). In terms of tissue distribution, ubiquitous; with highest level of expression in skeletal muscle. Isoform 3 is found at low levels in placenta, fetal liver, and skeletal muscle.

It is found in the nucleus. The protein localises to the cytoplasm. It catalyses the reaction L-seryl-[protein] + ATP = O-phospho-L-seryl-[protein] + ADP + H(+). The catalysed reaction is L-threonyl-[protein] + ATP = O-phospho-L-threonyl-[protein] + ADP + H(+). The enzyme catalyses L-tyrosyl-[protein] + ATP = O-phospho-L-tyrosyl-[protein] + ADP + H(+). Activated by phosphorylation by specific MAP kinase kinase kinases such as MAP3K1/MEKK1, MAP3K3/MEKK3, MAP3K11/MLK3 and MAP3K12/DLK. Functionally, dual specificity protein kinase which acts as an essential component of the MAP kinase signal transduction pathway. Essential component of the stress-activated protein kinase/c-Jun N-terminal kinase (SAP/JNK) signaling pathway. With MAP2K4/MKK4, is the one of the only known kinase to directly activate the stress-activated protein kinase/c-Jun N-terminal kinases MAPK8/JNK1, MAPK9/JNK2 and MAPK10/JNK3. MAP2K4/MKK4 and MAP2K7/MKK7 both activate the JNKs by phosphorylation, but they differ in their preference for the phosphorylation site in the Thr-Pro-Tyr motif. MAP2K4/MKK4 shows preference for phosphorylation of the Tyr residue and MAP2K7/MKK7 for the Thr residue. The monophosphorylation of JNKs on the Thr residue is sufficient to increase JNK activity indicating that MAP2K7/MKK7 is important to trigger JNK activity, while the additional phosphorylation of the Tyr residue by MAP2K4/MKK4 ensures optimal JNK activation. Has a specific role in JNK signal transduction pathway activated by pro-inflammatory cytokines. The MKK/JNK signaling pathway is also involved in mitochondrial death signaling pathway, including the release cytochrome c, leading to apoptosis. Part of a non-canonical MAPK signaling pathway, composed of the upstream MAP3K12 kinase and downstream MAP kinases MAPK1/ERK2 and MAPK3/ERK1, that enhances the AP-1-mediated transcription of APP in response to APOE. This Homo sapiens (Human) protein is Dual specificity mitogen-activated protein kinase kinase 7 (MAP2K7).